A 267-amino-acid chain; its full sequence is Cilia- and flagella-associated protein 300 (267 aa).

Belongs to the CFAP300 family. Interacts with DNAAF2.

The protein localises to the cytoplasm. The protein resides in the cytoskeleton. Its subcellular location is the cilium axoneme. Functionally, cilium- and flagellum-specific protein that plays a role in axonemal structure organization and motility. May play a role in outer and inner dynein arm assembly. This is Cilia- and flagella-associated protein 300 from Bos taurus (Bovine).